The chain runs to 136 residues: Aspartate 1-decarboxylase (136 aa).

The active-site Schiff-base intermediate with substrate; via pyruvic acid is the serine 25. The residue at position 25 (serine 25) is a Pyruvic acid (Ser). Threonine 57 serves as a coordination point for substrate. Tyrosine 58 serves as the catalytic Proton donor. Glycine 73 to alanine 75 is a binding site for substrate.

Belongs to the PanD family. As to quaternary structure, heterooctamer of four alpha and four beta subunits. Requires pyruvate as cofactor. In terms of processing, is synthesized initially as an inactive proenzyme, which is activated by self-cleavage at a specific serine bond to produce a beta-subunit with a hydroxyl group at its C-terminus and an alpha-subunit with a pyruvoyl group at its N-terminus.

It localises to the cytoplasm. The enzyme catalyses L-aspartate + H(+) = beta-alanine + CO2. Its pathway is cofactor biosynthesis; (R)-pantothenate biosynthesis; beta-alanine from L-aspartate: step 1/1. Catalyzes the pyruvoyl-dependent decarboxylation of aspartate to produce beta-alanine. The polypeptide is Aspartate 1-decarboxylase (Corynebacterium glutamicum (strain R)).